Consider the following 533-residue polypeptide: UDP-glucuronosyltransferase 1A1 (533 aa).

An N-terminal signal peptide occupies residues Met1–Ser25. 3 N-linked (GlcNAc...) asparagine glycosylation sites follow: Asn102, Asn295, and Asn347. A helical membrane pass occupies residues Val491–Phe507.

This sequence belongs to the UDP-glycosyltransferase family. As to quaternary structure, homodimer. Homooligomer. Interacts with UGT1A3, UGT1A4, UGT1A6, UGT1A7, UGT1A8, UGT1A9 and UGT1A10 to form heterodimers. Isoform 1 interacts with isoform 2/i2 suggesting that oligomerization is involved in negative regulation of transferase activity by isoform 2. Isoform 1 also interacts with respective i2 isoforms of UGT1A3, UGT1A4, UGT1A6, UGT1A7, UGT1A8, UGT1A9 and UGT1A10. Expressed in liver, colon and small intestine. Not expressed in kidney, esophagus and skin. As to expression, expressed in liver, colon, small intestine and kidney. Not expressed in esophagus and skin.

It localises to the endoplasmic reticulum membrane. Its subcellular location is the cytoplasm. The protein localises to the perinuclear region. It carries out the reaction glucuronate acceptor + UDP-alpha-D-glucuronate = acceptor beta-D-glucuronoside + UDP + H(+). It catalyses the reaction 17beta-estradiol + UDP-alpha-D-glucuronate = 17beta-estradiol 3-O-(beta-D-glucuronate) + UDP + H(+). The catalysed reaction is 2-hydroxyestrone + UDP-alpha-D-glucuronate = 2-hydroxyestrone 3-O-(beta-D-glucuronate) + UDP + H(+). The enzyme catalyses 2-hydroxy-17beta-estradiol + UDP-alpha-D-glucuronate = 2-hydroxy-17beta-estradiol 3-O-(beta-D-glucuronate) + UDP + H(+). It carries out the reaction 2-methoxy-17beta-estradiol + UDP-alpha-D-glucuronate = 2-methoxy-17beta-estradiol 3-O-(beta-D-glucuronate) + UDP + H(+). It catalyses the reaction 17alpha-estradiol + UDP-alpha-D-glucuronate = 17alpha-estradiol 3-O-(beta-D-glucuronate) + UDP + H(+). The catalysed reaction is 16beta,17beta-estriol + UDP-alpha-D-glucuronate = 16beta,17beta-estriol 16-O-(beta-D-glucuronate) + UDP + H(+). The enzyme catalyses losartan + UDP-alpha-D-glucuronate = losartan-2-N-beta-D-glucuronide + UDP. It carries out the reaction prunetin + UDP-alpha-D-glucuronate = prunetin-4'-O-beta-D-glucuronide + UDP. It catalyses the reaction SN-38 + UDP-alpha-D-glucuronate = SN-38 O-beta-D-glucuronide + UDP + H(+). The catalysed reaction is (4Z,15Z)-bilirubin IXalpha + UDP-alpha-D-glucuronate = (4Z,15Z)-bilirubin IXalpha C12-beta-D-glucuronoside + UDP. The enzyme catalyses (4Z,15Z)-bilirubin IXalpha + UDP-alpha-D-glucuronate = (4Z,15Z)-bilirubin IXalpha C8-beta-D-glucuronoside + UDP. It carries out the reaction (4Z,15Z)-bilirubin IXalpha C8-beta-D-glucuronoside + UDP-alpha-D-glucuronate = (4Z,15Z)-bilirubin IXalpha C8,C12-beta-D-bisglucuronoside + UDP. It catalyses the reaction (4Z,15Z)-bilirubin IXalpha C12-beta-D-glucuronoside + UDP-alpha-D-glucuronate = (4Z,15Z)-bilirubin IXalpha C8,C12-beta-D-bisglucuronoside + UDP. The catalysed reaction is 8-iso-prostaglandin F2alpha + UDP-alpha-D-glucuronate = 8-iso-prostaglandin F2alpha-glucuronide + UDP + H(+). The enzyme catalyses (5Z,8Z,11Z,14Z)-eicosatetraenoate + UDP-alpha-D-glucuronate = O-[(5Z),(8Z),(11Z),(14Z)-eicosatetraenoyl]-beta-D-glucuronate + UDP. It carries out the reaction 15-hydroxy-(5Z,8Z,11Z,13E)-eicosatetraenoate + UDP-alpha-D-glucuronate = 15-O-(beta-D-glucuronosyl)-(5Z,8Z,11Z,14Z)-eicosatetraenoate + UDP + H(+). It catalyses the reaction 20-hydroxy-(5Z,8Z,11Z,14Z)-eicosatetraenoate + UDP-alpha-D-glucuronate = 20-O-(beta-D-glucuronosyl)-(5Z,8Z,11Z,14Z)-eicosatetraenoate + UDP + H(+). The catalysed reaction is prostaglandin B1 + UDP-alpha-D-glucuronate = 15-O-(beta-D-glucuronosyl)-prostaglandin B1 + UDP + H(+). The enzyme catalyses (E)-ferulate + UDP-alpha-D-glucuronate = (E)-4-O-(beta-D-glucuronosyl)-ferulate + UDP + H(+). It carries out the reaction (E)-ferulate + UDP-alpha-D-glucuronate = (E)-ferulic acid beta-D-glucuronate ester + UDP. Functionally, UDP-glucuronosyltransferase (UGT) that catalyzes phase II biotransformation reactions in which lipophilic substrates are conjugated with glucuronic acid to increase the metabolite's water solubility, thereby facilitating excretion into either the urine or bile. Essential for the elimination and detoxification of drugs, xenobiotics and endogenous compounds. Catalyzes the glucuronidation of endogenous estrogen hormones such as estradiol, estrone and estriol. Involved in the glucuronidation of bilirubin, a degradation product occurring in the normal catabolic pathway that breaks down heme in vertebrates. Involved in the glucuronidation of arachidonic acid (AA) and AA-derived eicosanoids including 15-HETE, 20-HETE, PGB1 and F2-isoprostane (8-iso-PGF2alpha). Involved in the glucuronidation of the phytochemical ferulic acid at the phenolic or the carboxylic acid group. Also catalyzes the glucuronidation the isoflavones genistein, daidzein, glycitein, formononetin, biochanin A and prunetin, which are phytoestrogens with anticancer and cardiovascular properties. Involved in the glucuronidation of the AGTR1 angiotensin receptor antagonist losartan, a drug which can inhibit the effect of angiotensin II. Involved in the biotransformation of 7-ethyl-10-hydroxycamptothecin (SN-38), the pharmacologically active metabolite of the anticancer drug irinotecan. In terms of biological role, lacks UGT glucuronidation activity but acts as a negative regulator of isoform 1. The sequence is that of UDP-glucuronosyltransferase 1A1 from Homo sapiens (Human).